The primary structure comprises 186 residues: Hydra actinoporin-like toxin 6 (186 aa).

The N-terminal stretch at 1–21 (MLVYVCLVVILIQLPFGAAGG) is a signal peptide. A Cell attachment site motif is present at residues 158–160 (RAG).

The protein belongs to the actinoporin family. HALT subfamily. As to quaternary structure, octamer or nonamer in membranes. Monomer in the soluble state. In vitro, interacts with folate receptor alpha (of target organism). As to expression, expressed female germline during oogenesis.

The protein resides in the nematocyst. It is found in the secreted. Its subcellular location is the target cell membrane. Its function is as follows. Pore-forming protein that forms hydrophilic pores and causes cytolysis. Compared to equinatoxin-2 (AC P61914), it reveals lower cytolysis activity (5-12-fold difference, tested on erythrocytes), a larger pore size (probably 2-3 nm) and different affinity to membrane lipids (100-fold lower affinity to sphingomyelin). Binds to sulfatides. Shows cytolytic activity on HeLa cells, with a different potency than its paralogs (from most potent to less potent: HALT-4&gt;HALT-6~HALT-1&gt;HALT-3&gt;HALT-7&gt;HALT-2). Pore formation is a multi-step process that involves specific recognition of membrane lipid by a protein aromatic residues rich region, firm binding to the membrane (mainly driven by hydrophobic interactions) accompanied by the transfer of the N-terminal region to the lipid-water interface and finally pore formation after oligomerization of monomers. In vitro, binds to the folate receptor alpha (FOLR1), a GPI-anchored membrane protein that plays a major role in the uptake of folate/folic acid into cells via endocytosis, suggesting a possible involvement of this receptor in the mechanism of HALT-1-induced cell lysis. In vivo, does not cause visible paralysis in larvae of the blowfly Sarcophaga faculata, the most common arthropod prey of Hydra. The polypeptide is Hydra actinoporin-like toxin 6 (Hydra vulgaris (Hydra)).